A 336-amino-acid chain; its full sequence is Glucokinase (336 aa).

Residue 12-17 coordinates ATP; sequence ADIGGT.

The protein belongs to the bacterial glucokinase family.

It localises to the cytoplasm. It carries out the reaction D-glucose + ATP = D-glucose 6-phosphate + ADP + H(+). In Helicobacter pylori (strain ATCC 700392 / 26695) (Campylobacter pylori), this protein is Glucokinase.